Here is a 364-residue protein sequence, read N- to C-terminus: Pectinesterase (364 aa).

A signal peptide spans 1–22 (MSCIAVEAVLLGILLYIPIVLS). N-linked (GlcNAc...) asparagine glycosylation occurs at asparagine 103. Aspartate 220 is a catalytic residue.

The protein resides in the secreted. It catalyses the reaction [(1-&gt;4)-alpha-D-galacturonosyl methyl ester](n) + n H2O = [(1-&gt;4)-alpha-D-galacturonosyl](n) + n methanol + n H(+). Its pathway is glycan metabolism; pectin degradation; 2-dehydro-3-deoxy-D-gluconate from pectin: step 1/5. Catalyzes the demethylesterification of homogalacturonan components of pectin. The sequence is that of Pectinesterase from Parthenium hysterophorus (Santa Maria feverfew).